The primary structure comprises 307 residues: Ribosomal protein L11 methyltransferase (307 aa).

S-adenosyl-L-methionine-binding residues include Thr162, Gly183, Asp205, and Asn244.

This sequence belongs to the methyltransferase superfamily. PrmA family.

The protein localises to the cytoplasm. The catalysed reaction is L-lysyl-[protein] + 3 S-adenosyl-L-methionine = N(6),N(6),N(6)-trimethyl-L-lysyl-[protein] + 3 S-adenosyl-L-homocysteine + 3 H(+). In terms of biological role, methylates ribosomal protein L11. The polypeptide is Ribosomal protein L11 methyltransferase (Bordetella bronchiseptica (strain ATCC BAA-588 / NCTC 13252 / RB50) (Alcaligenes bronchisepticus)).